The chain runs to 366 residues: Ribosomal RNA large subunit methyltransferase M (366 aa).

Residues S188, 221-224 (CPGG), D240, D260, and D277 contribute to the S-adenosyl-L-methionine site. K306 serves as the catalytic Proton acceptor.

This sequence belongs to the class I-like SAM-binding methyltransferase superfamily. RNA methyltransferase RlmE family. RlmM subfamily. As to quaternary structure, monomer.

It is found in the cytoplasm. The enzyme catalyses cytidine(2498) in 23S rRNA + S-adenosyl-L-methionine = 2'-O-methylcytidine(2498) in 23S rRNA + S-adenosyl-L-homocysteine + H(+). Its function is as follows. Catalyzes the 2'-O-methylation at nucleotide C2498 in 23S rRNA. This chain is Ribosomal RNA large subunit methyltransferase M, found in Shigella boydii serotype 4 (strain Sb227).